A 360-amino-acid polypeptide reads, in one-letter code: Photosystem II protein D1 (360 aa).

The next 3 helical transmembrane spans lie at 29–46, 118–133, and 142–156; these read YIGW…TATT, HFLL…EWEF, and WISV…AASA. His118 serves as a coordination point for chlorophyll a. Trp126 contributes to the pheophytin a binding site. Positions 170 and 189 each coordinate [CaMn4O5] cluster. Residues 197-218 form a helical membrane-spanning segment; that stretch reads FHQLGVAGVFGGSLFSAMHGSL. Position 198 (His198) interacts with chlorophyll a. Residues His215 and 264 to 265 contribute to the a quinone site; that span reads SF. Position 215 (His215) interacts with Fe cation. Residue His272 participates in Fe cation binding. Residues 274–288 form a helical membrane-spanning segment; that stretch reads FLGLWPVVGIWFTAL. Positions 332, 333, 342, and 344 each coordinate [CaMn4O5] cluster. Residues 345 to 360 constitute a propeptide that is removed on maturation; the sequence is AGESLPVALTAPAVNG.

Belongs to the reaction center PufL/M/PsbA/D family. In terms of assembly, PSII is composed of 1 copy each of membrane proteins PsbA, PsbB, PsbC, PsbD, PsbE, PsbF, PsbH, PsbI, PsbJ, PsbK, PsbL, PsbM, PsbT, PsbX, PsbY, PsbZ, Psb30/Ycf12, at least 3 peripheral proteins of the oxygen-evolving complex and a large number of cofactors. It forms dimeric complexes. The D1/D2 heterodimer binds P680, chlorophylls that are the primary electron donor of PSII, and subsequent electron acceptors. It shares a non-heme iron and each subunit binds pheophytin, quinone, additional chlorophylls, carotenoids and lipids. D1 provides most of the ligands for the Mn4-Ca-O5 cluster of the oxygen-evolving complex (OEC). There is also a Cl(-1) ion associated with D1 and D2, which is required for oxygen evolution. The PSII complex binds additional chlorophylls, carotenoids and specific lipids. is required as a cofactor. In terms of processing, tyr-161 forms a radical intermediate that is referred to as redox-active TyrZ, YZ or Y-Z. C-terminally processed by CTPA; processing is essential to allow assembly of the oxygen-evolving complex and thus photosynthetic growth.

Its subcellular location is the plastid. It is found in the chloroplast thylakoid membrane. It carries out the reaction 2 a plastoquinone + 4 hnu + 2 H2O = 2 a plastoquinol + O2. Functionally, photosystem II (PSII) is a light-driven water:plastoquinone oxidoreductase that uses light energy to abstract electrons from H(2)O, generating O(2) and a proton gradient subsequently used for ATP formation. It consists of a core antenna complex that captures photons, and an electron transfer chain that converts photonic excitation into a charge separation. The D1/D2 (PsbA/PsbD) reaction center heterodimer binds P680, the primary electron donor of PSII as well as several subsequent electron acceptors. The polypeptide is Photosystem II protein D1 (Rhodomonas salina (Cryptomonas salina)).